The chain runs to 316 residues: Neutrophil-stimulating factor 1 (316 aa).

An N-terminal signal peptide occupies residues 1–21 (METSLPITVVFLIVLITGAQT). The tract at residues 126 to 316 (HGEMLERMTA…WFAVSWNDRG (191 aa)) is involved in interaction with human CD47. N-linked (GlcNAc...) asparagine glycosylation occurs at asparagine 169.

In terms of assembly, interacts with human CD4. Interacts with human CD47; the interaction results in inhibition of phagocytosis activity of host macrophages. Female salivary gland (at protein level). Saliva (at protein level). Some expression in ovary and midgut (at protein level).

Its subcellular location is the secreted. Its function is as follows. Activates host neutrophils; induces expression of IL1B and CXCL2 at the bite site. Promotes activation of human CD4(+) T-cells. Inhibits phagocytosis activity of host macrophages via the interaction with CD47 receptor on their surface. Suppresses expression of pro-inflammatory cytokines, such as IFN-gamma/IFNG, IL2, TNF-alpha/TNF, IL12B, IL8/CXCL8, IL6, in host white blood cells. Reduces host polymorphonuclear neutrophil chemotaxis induced by N-formylmethionine-leucylphenylalanine (fMLF). Reduces CD11b/ITGAM expression in fMLF-induced host polymorphonuclear neutrophils. Functionally, (Microbial infection) Enhances early replication of Zika virus in the host. The chain is Neutrophil-stimulating factor 1 from Aedes aegypti (Yellowfever mosquito).